Reading from the N-terminus, the 277-residue chain is S-formylglutathione hydrolase FrmB (277 aa).

Catalysis depends on charge relay system residues serine 145, aspartate 221, and histidine 254.

This sequence belongs to the esterase D family.

It catalyses the reaction S-formylglutathione + H2O = formate + glutathione + H(+). In terms of biological role, serine hydrolase involved in the detoxification of formaldehyde. Hydrolyzes S-formylglutathione to glutathione and formate. The sequence is that of S-formylglutathione hydrolase FrmB (frmB) from Escherichia coli (strain ATCC 8739 / DSM 1576 / NBRC 3972 / NCIMB 8545 / WDCM 00012 / Crooks).